The following is a 222-amino-acid chain: MKFFIFTCLLAVALAKNTMEHVSSSEESIISQETYKQEKNMAINPSKENLCSTFCKEVVRNANEEEYSIGSSSEESAEVATEEVKITVDDKHYQKALNEINQFYQKFPQYLQYLYQGPIVLNPWDQVKRNAVPITPTLNREQLSTSEENSKKTVDMESTEVFTKKTKLTEEEKNRLNFLKKISQRYQKFALPQYLKTVYQHQKAMKPWIQPKTKVIPYVRYL.

Positions 1-15 (MKFFIFTCLLAVALA) are cleaved as a signal peptide. A phosphoserine mark is found at Ser-23, Ser-24, Ser-25, Ser-28, Ser-46, Ser-71, Ser-72, Ser-73, Ser-76, Ser-144, Ser-146, Ser-150, and Ser-158. Positions 76-140 (SAEVATEEVK…AVPITPTLNR (65 aa)) form a repeat. A repeat spans 158-222 (STEVFTKKTK…TKVIPYVRYL (65 aa)).

This sequence belongs to the alpha-casein family. As to expression, mammary gland specific. Secreted in milk.

It is found in the secreted. Its function is as follows. Important role in the capacity of milk to transport calcium phosphate. In terms of biological role, casocidin-I inhibits the growth of E.coli and S.carnosus. This is Alpha-S2-casein (CSN1S2) from Bos taurus (Bovine).